A 355-amino-acid chain; its full sequence is S-adenosylmethionine:tRNA ribosyltransferase-isomerase (355 aa).

It belongs to the QueA family. In terms of assembly, monomer.

The protein resides in the cytoplasm. It catalyses the reaction 7-aminomethyl-7-carbaguanosine(34) in tRNA + S-adenosyl-L-methionine = epoxyqueuosine(34) in tRNA + adenine + L-methionine + 2 H(+). It participates in tRNA modification; tRNA-queuosine biosynthesis. In terms of biological role, transfers and isomerizes the ribose moiety from AdoMet to the 7-aminomethyl group of 7-deazaguanine (preQ1-tRNA) to give epoxyqueuosine (oQ-tRNA). The polypeptide is S-adenosylmethionine:tRNA ribosyltransferase-isomerase (Burkholderia orbicola (strain MC0-3)).